The sequence spans 433 residues: Enolase (433 aa).

(2R)-2-phosphoglycerate is bound at residue Gln166. Catalysis depends on Glu208, which acts as the Proton donor. Mg(2+) is bound by residues Asp245, Glu290, and Asp317. (2R)-2-phosphoglycerate is bound by residues Lys342, Arg371, Ser372, and Lys393. Lys342 functions as the Proton acceptor in the catalytic mechanism.

The protein belongs to the enolase family. The cofactor is Mg(2+).

The protein localises to the cytoplasm. It is found in the secreted. Its subcellular location is the cell surface. The enzyme catalyses (2R)-2-phosphoglycerate = phosphoenolpyruvate + H2O. It participates in carbohydrate degradation; glycolysis; pyruvate from D-glyceraldehyde 3-phosphate: step 4/5. In terms of biological role, catalyzes the reversible conversion of 2-phosphoglycerate (2-PG) into phosphoenolpyruvate (PEP). It is essential for the degradation of carbohydrates via glycolysis. The chain is Enolase from Clostridium novyi (strain NT).